The following is a 3059-amino-acid chain: Genome polyprotein (3059 aa).

A Peptidase S30 domain is found at 154–298; it reads GVTPYSVQQL…ESTMLSTHHY (145 aa). Active-site for P1 proteinase activity residues include His207, Asp216, and Ser249. The Involved in interaction with stylet and aphid transmission signature appears at 349–352; that stretch reads KITC. An Involved in virions binding and aphid transmission motif is present at residues 607-609; the sequence is PTK. The Peptidase C6 domain maps to 633 to 755; that stretch reads MYIAKSGYCY…DSEMKHYRVG (123 aa). Residues Cys641 and His714 each act as for helper component proteinase activity in the active site. Residues 1226 to 1378 enclose the Helicase ATP-binding domain; that stretch reads QIAHDLHTDI…TQYPVEIRVE (153 aa). 1239 to 1246 contributes to the ATP binding site; sequence GAVGSGKS. Positions 1328-1331 match the DEFH box motif; it reads DEFH. One can recognise a Helicase C-terminal domain in the interval 1397–1556; that stretch reads DLTSKCDNLL…GLPISTQSVT (160 aa). The Nuclear localization signal motif lies at 1883-1890; it reads KKGKTKGK. Residue Tyr1905 is modified to O-(5'-phospho-RNA)-tyrosine. The Peptidase C4 domain occupies 2032 to 2250; it reads STSMFRGVRD…VCWGSFHLQD (219 aa). Catalysis depends on for nuclear inclusion protein A activity residues His2077, Asp2112, and Cys2182. The region spanning 2516-2640 is the RdRp catalytic domain; sequence WVYCDADGSQ…AIRPDMEHKL (125 aa). Position 3042 is a phosphothreonine (Thr3042).

This sequence belongs to the potyviridae genome polyprotein family. In terms of assembly, interacts with host eIF4E protein (via cap-binding region); this interaction mediates the translation of the VPg-viral RNA conjugates. Part of a complex that comprises VPg, RNA, host EIF4E and EIF4G; this interaction mediates the translation of the VPg-viral RNA conjugates. Post-translationally, VPg is uridylylated by the polymerase and is covalently attached to the 5'-end of the genomic RNA. This uridylylated form acts as a nucleotide-peptide primer for the polymerase. In terms of processing, phosphorylation inhibits the RNA-binding capacity of the capsid protein. Potyviral RNA is expressed as two polyproteins which undergo post-translational proteolytic processing. Genome polyprotein is processed by NIa-pro, P1 and HC-pro proteinases resulting in the production of at least ten individual proteins. P3N-PIPO polyprotein is cleaved by P1 and HC-pro proteinases resulting in the production of three individual proteins. The P1 proteinase and the HC-pro cleave only their respective C-termini autocatalytically. 6K1 is essential for proper proteolytic separation of P3 from CI.

It is found in the host cytoplasmic vesicle. It localises to the host nucleus. Its subcellular location is the virion. The enzyme catalyses RNA(n) + a ribonucleoside 5'-triphosphate = RNA(n+1) + diphosphate. It catalyses the reaction Hydrolyzes glutaminyl bonds, and activity is further restricted by preferences for the amino acids in P6 - P1' that vary with the species of potyvirus, e.g. Glu-Xaa-Xaa-Tyr-Xaa-Gln-|-(Ser or Gly) for the enzyme from tobacco etch virus. The natural substrate is the viral polyprotein, but other proteins and oligopeptides containing the appropriate consensus sequence are also cleaved.. It carries out the reaction Hydrolyzes a Gly-|-Gly bond at its own C-terminus, commonly in the sequence -Tyr-Xaa-Val-Gly-|-Gly, in the processing of the potyviral polyprotein.. Functionally, required for aphid transmission and also has proteolytic activity. Only cleaves a Gly-Gly dipeptide at its own C-terminus. Interacts with virions and aphid stylets. Acts as a suppressor of RNA-mediated gene silencing, also known as post-transcriptional gene silencing (PTGS), a mechanism of plant viral defense that limits the accumulation of viral RNAs. May have RNA-binding activity. In terms of biological role, has helicase activity. It may be involved in replication. Its function is as follows. Indispensable for virus replication. Reduces the abundance of host transcripts related to jasmonic acid biosynthesis therefore altering the host defenses. In order to increase its own stability, decreases host protein degradation pathways. Indispensable for virus replication. Functionally, mediates the cap-independent, EIF4E-dependent translation of viral genomic RNAs. Binds to the cap-binding site of host EIF4E and thus interferes with the host EIF4E-dependent mRNA export and translation. VPg-RNA directly binds EIF4E and is a template for transcription. Also forms trimeric complexes with EIF4E-EIF4G, which are templates for translation. In terms of biological role, has RNA-binding and proteolytic activities. Its function is as follows. An RNA-dependent RNA polymerase that plays an essential role in the virus replication. Involved in aphid transmission, cell-to-cell and systemis movement, encapsidation of the viral RNA and in the regulation of viral RNA amplification. The sequence is that of Genome polyprotein from Potato virus A (PVA).